The chain runs to 301 residues: NADH-ubiquinone oxidoreductase chain 1 (301 aa).

8 consecutive transmembrane segments (helical) span residues 4–24, 62–82, 96–116, 140–160, 165–185, 216–236, 247–267, and 279–299; these read IIPI…VLGY, LALF…MWIP, ILFM…SGWA, LAII…STLI, YTWL…STIA, LFFL…IILF, EMYT…FLWI, and LMHL…MWHV.

It belongs to the complex I subunit 1 family.

The protein localises to the mitochondrion inner membrane. The catalysed reaction is a ubiquinone + NADH + 5 H(+)(in) = a ubiquinol + NAD(+) + 4 H(+)(out). Its function is as follows. Core subunit of the mitochondrial membrane respiratory chain NADH dehydrogenase (Complex I) that is believed to belong to the minimal assembly required for catalysis. Complex I functions in the transfer of electrons from NADH to the respiratory chain. The immediate electron acceptor for the enzyme is believed to be ubiquinone. This chain is NADH-ubiquinone oxidoreductase chain 1 (MT-ND1), found in Nyctalus noctula (Noctule bat).